A 107-amino-acid chain; its full sequence is DNA-directed RNA polymerase subunit omega (107 aa).

This sequence belongs to the RNA polymerase subunit omega family. As to quaternary structure, the RNAP catalytic core consists of 2 alpha, 1 beta, 1 beta' and 1 omega subunit. When a sigma factor is associated with the core the holoenzyme is formed, which can initiate transcription.

The catalysed reaction is RNA(n) + a ribonucleoside 5'-triphosphate = RNA(n+1) + diphosphate. Its function is as follows. Promotes RNA polymerase assembly. Latches the N- and C-terminal regions of the beta' subunit thereby facilitating its interaction with the beta and alpha subunits. The sequence is that of DNA-directed RNA polymerase subunit omega from Oenococcus oeni (strain ATCC BAA-331 / PSU-1).